We begin with the raw amino-acid sequence, 817 residues long: ABC transporter G family member STR (817 aa).

The interval 1–30 is disordered; that stretch reads MARLERDGTNKSLESLMDSHKPGGTTTNLN. Residues 1-542 lie on the Cytoplasmic side of the membrane; the sequence is MARLERDGTN…RTVLNVIRTP (542 aa). The region spanning 43–294 is the ABC transporter domain; it reads LEFTNLSYSI…LSGFGRPVPD (252 aa). Position 87–94 (87–94) interacts with ATP; sequence GPSGAGKS. Disordered regions lie at residues 321 to 349, 362 to 395, and 439 to 463; these read QYQH…RRNT, GFTA…LERR, and RPPS…GPRS. Residues 362 to 375 show a composition bias toward polar residues; sequence GFTAGTPQPDSSQF. Acidic residues predominate over residues 377–388; it reads LDDDDNDDDENF. A helical membrane pass occupies residues 543–563; it reads ELFASREIVLTVMALVLSTIF. Over 564–579 the chain is Extracellular; sequence KNLGDTTFIDINRLLN. A helical transmembrane segment spans residues 580 to 600; the sequence is FYIFAVCLVFFSSNDAVPSFI. At 601 to 621 the chain is on the cytoplasmic side; it reads MERFIFIRETSHNAYRASSYV. The chain crosses the membrane as a helical span at residues 622–642; it reads ISSLIVYLPFFAVQGLTFAVI. At 643 to 657 the chain is on the extracellular side; sequence TKLMLHLKSNLFNFW. Residues 658–678 traverse the membrane as a helical segment; it reads MILFASLITTNAYVMLVSALV. Residues 679–681 are Cytoplasmic-facing; it reads PSY. Residues 682–702 form a helical membrane-spanning segment; it reads ITGYAVVIATTALFFLTCGFF. At 703 to 787 the chain is on the extracellular side; sequence LKRTQIPAYW…TMDITMESLW (85 aa). N762 carries N-linked (GlcNAc...) asparagine glycosylation. Residues 788 to 808 form a helical membrane-spanning segment; it reads YDILILLAWGVLYRFFFYLVL. The Cytoplasmic portion of the chain corresponds to 809 to 817; the sequence is RFYSKNERK.

Belongs to the ABC transporter superfamily. ABCG family. Stunted arbuscule (STR) subfamily. As to quaternary structure, heterodimerizes with STR2; the resulting transporter is located in the peri-arbuscular membrane. Expressed constitutively in the vascular tissue of roots.

The protein localises to the cell membrane. Together with STR2, required for arbuscule development in arbuscular mycorrhizal (AM) symbiosis. This chain is ABC transporter G family member STR, found in Medicago truncatula (Barrel medic).